The primary structure comprises 543 residues: Sensor histidine kinase DcuS (543 aa).

Topologically, residues 1-20 (MRHSLPYRMLRKRPMKLSTT) are cytoplasmic. Residues 21 to 41 (VILMVSAVLFSVLLVVHLIYF) form a helical membrane-spanning segment. Over 42–181 (SQISDMTRDG…VTQQINDSRW (140 aa)) the chain is Periplasmic. Residues 107-110 (RYSH), lysine 121, 140-142 (GFL), and arginine 147 contribute to the (R)-malate site. Residues 182–202 (SIIWSVLFGMLVGLIGTCILV) form a helical membrane-spanning segment. Over 203-543 (KVLKKILFGL…IPWDGERSNR (341 aa)) the chain is Cytoplasmic. Residues 212 to 323 (LEPYEISTLF…IIGAISTFRD (112 aa)) form the PAS domain. The Histidine kinase domain occupies 346-538 (ERSHEFMNKL…QFFVQIPWDG (193 aa)). Histidine 349 is subject to Phosphohistidine; by autocatalysis.

In terms of assembly, homodimer. In terms of processing, autophosphorylated. The phosphoryl group is rapidly transferred to DcuR.

The protein localises to the cell inner membrane. The enzyme catalyses ATP + protein L-histidine = ADP + protein N-phospho-L-histidine.. Functionally, member of the two-component regulatory system DcuR/DcuS. Involved in the C4-dicarboxylate-stimulated regulation of the genes encoding the anaerobic fumarate respiratory system (frdABCD; nuoAN; dcuB; sdhCDAB; etc.). Weakly regulates the aerobic C4-dicarboxylate transporter dctA. Activates DcuR by phosphorylation. This is Sensor histidine kinase DcuS (dcuS) from Escherichia coli O157:H7.